A 118-amino-acid chain; its full sequence is Small ribosomal subunit protein uS13 (118 aa).

The disordered stretch occupies residues 91-118 (HRRGLPVRGQRTKTNARTRKGPRKPIKK).

The protein belongs to the universal ribosomal protein uS13 family. Part of the 30S ribosomal subunit. Forms a loose heterodimer with protein S19. Forms two bridges to the 50S subunit in the 70S ribosome.

Its function is as follows. Located at the top of the head of the 30S subunit, it contacts several helices of the 16S rRNA. In the 70S ribosome it contacts the 23S rRNA (bridge B1a) and protein L5 of the 50S subunit (bridge B1b), connecting the 2 subunits; these bridges are implicated in subunit movement. Contacts the tRNAs in the A and P-sites. In Hamiltonella defensa subsp. Acyrthosiphon pisum (strain 5AT), this protein is Small ribosomal subunit protein uS13.